Here is a 329-residue protein sequence, read N- to C-terminus: Ribosomal RNA small subunit methyltransferase C (329 aa).

This sequence belongs to the methyltransferase superfamily. RsmC family. In terms of assembly, monomer.

Its subcellular location is the cytoplasm. The enzyme catalyses guanosine(1207) in 16S rRNA + S-adenosyl-L-methionine = N(2)-methylguanosine(1207) in 16S rRNA + S-adenosyl-L-homocysteine + H(+). In terms of biological role, specifically methylates the guanine in position 1207 of 16S rRNA in the 30S particle. The polypeptide is Ribosomal RNA small subunit methyltransferase C (Actinobacillus pleuropneumoniae serotype 5b (strain L20)).